Reading from the N-terminus, the 1006-residue chain is SAC3 family protein A (1006 aa).

Disordered stretches follow at residues 1-75, 106-162, 183-239, 266-326, 516-550, 595-638, and 650-690; these read MNHG…GPAT, TPYQ…PGSY, GYQS…TIAT, GTEK…AVST, TVTTTNVTNSESSSAQLSSLQNKSPTRRPKSRWEP, GFKP…SDKD, and AGSA…GNLH. Composition is skewed to polar residues over residues 26-75 and 106-115; these read GSQT…GPAT and TPYQTSSDPH. Residues 116–140 are compositionally biased toward low complexity; the sequence is NYSNTGYSNYYSGYQQQPSQSYPQP. The segment covering 144–162 has biased composition (polar residues); the sequence is YQNTGAPQPLSSFQNPGSY. Composition is skewed to polar residues over residues 269–282 and 313–326; these read KLSTPTTSAYSQSF and SHPPSQQPGAAVST. Residues 516-539 show a composition bias toward low complexity; it reads TVTTTNVTNSESSSAQLSSLQNKS. Basic residues predominate over residues 609–618; the sequence is SFQRPVKRQR. Residues 653–680 show a composition bias toward basic and acidic residues; the sequence is AEEKKRRDSRSKRFEKIQGHSRGNDLTK. The PCI domain maps to 804–978; that stretch reads DLPEYNQCLS…DMLLDTKATS (175 aa).

The protein belongs to the SAC3 family. As to quaternary structure, interacts with EER5, SAC3B and CML20.

The protein localises to the nucleus. Functionally, component of the TREX-2 complex (transcription and export complex 2), a muliprotein complex that functions in docking export-competent ribonucleoprotein particles (mRNPs) to the nuclear entrance of the nuclear pore complex (nuclear basket). TREX-2 participates in mRNA export and accurate chromatin positioning in the nucleus by tethering genes to the nuclear periphery. This is SAC3 family protein A from Arabidopsis thaliana (Mouse-ear cress).